A 773-amino-acid polypeptide reads, in one-letter code: Polyribonucleotide nucleotidyltransferase (773 aa).

Residues aspartate 490 and aspartate 496 each contribute to the Mg(2+) site. Residues 557 to 616 (PKIDTITIPVDKIKVVIGKGGEQIDKIIAETGVKIDIDDEGLCSIFSSDQAAIDRAKEII) enclose the KH domain. An S1 motif domain is found at 626-694 (GEIYDAKVVR…DKGRVDASMR (69 aa)). Over residues 700–721 (PEGYVEPERKPRERRENGDRRK) the composition is skewed to basic and acidic residues. Positions 700–773 (PEGYVEPERK…FPELSTKKPE (74 aa)) are disordered. A compositionally biased stretch (low complexity) spans 739–748 (RNNQGNKVGN). Residues 751–773 (FELRERKSHIDEEFPELSTKKPE) are compositionally biased toward basic and acidic residues.

It belongs to the polyribonucleotide nucleotidyltransferase family. Mg(2+) serves as cofactor.

Its subcellular location is the cytoplasm. It catalyses the reaction RNA(n+1) + phosphate = RNA(n) + a ribonucleoside 5'-diphosphate. Its function is as follows. Involved in mRNA degradation. Catalyzes the phosphorolysis of single-stranded polyribonucleotides processively in the 3'- to 5'-direction. The polypeptide is Polyribonucleotide nucleotidyltransferase (Lactococcus lactis subsp. lactis (strain IL1403) (Streptococcus lactis)).